Here is a 61-residue protein sequence, read N- to C-terminus: Large ribosomal subunit protein eL24 (61 aa).

Zn(2+) contacts are provided by Cys-7, Cys-10, Cys-33, and Cys-37. The C4-type zinc-finger motif lies at 7–37 (CSFCGKEIPPATGLMYIRNDGSILWFCSNKC).

The protein belongs to the eukaryotic ribosomal protein eL24 family. Part of the 50S ribosomal subunit. Forms a cluster with proteins L3 and L14. Zn(2+) is required as a cofactor.

Binds to the 23S rRNA. The chain is Large ribosomal subunit protein eL24 from Sulfurisphaera tokodaii (strain DSM 16993 / JCM 10545 / NBRC 100140 / 7) (Sulfolobus tokodaii).